Reading from the N-terminus, the 2335-residue chain is Pre-mRNA-processing-splicing factor 8 (2335 aa).

Residue Ala2 is modified to N-acetylalanine. Positions 812 to 1303 (TTVHWLESRR…KIQTRIKIGL (492 aa)) are reverse transcriptase homology domain. Phosphoserine occurs at positions 859 and 1358. Residues 1304–1577 (NSKMPSRFPP…TLKISLIQIF (274 aa)) are linker. Lys1425 is modified (N6,N6-dimethyllysine). Lys1463 carries the N6-acetyllysine modification. The interval 1513–1526 (MKWKKLTNAQRSGL) is important for branch point selection. Residues 1581-1752 (LWQKIHESIV…LRERIRKGLQ (172 aa)) form a restriction endonuclease homology domain region. The interval 1669-2034 (GDYDSHDIER…QIAEIEKQTK (366 aa)) is involved in interaction with pre-mRNA 5' splice site. The segment at 1767-2020 (NYGELFSNQI…ILGMEISAPS (254 aa)) is RNase H homology domain. The MPN domain occupies 2103-2234 (TYILPKNVLK…LTAYKLTPSG (132 aa)). Residues 2301-2335 (PKEFYHEVHRPSHFLNFALLQEGEVYSADREDLYA) form a required for interaction with EFTUD2 and SNRNP200 region.

Part of the U5 snRNP complex. Component of the U4/U6-U5 tri-snRNP complex composed of the U4, U6 and U5 snRNAs and at least PRPF3, PRPF4, PRPF6, PRPF8, PRPF31, SNRNP200, TXNL4A, SNRNP40, DDX23, CD2BP2, PPIH, SNU13, EFTUD2, SART1 and USP39. Component of the U5.U4atac/U6atac snRNP complexes in U12-dependent spliceosomes. Within the minor spliceosome, which acts on U12-type introns, interacts with PPIL2 and RBM48. Core component of U2-type precatalytic, catalytic and postcatalytic spliceosomal complexes. Found in a mRNA splicing-dependent exon junction complex (EJC) with SRRM1. Interacts with U5 snRNP proteins SNRP116 and SNRNP40. Interacts with EFTUD2. Interacts (via the MPN (JAB/Mov34) domain) with PRPF3 ('Lys-63'-linked polyubiquitinated); may stabilize the U4/U6-U5 tri-snRNP complex. Interacts (via RNase H homology domain) with AAR2. Interacts with RPAP3 and URI1 in a ZNHIT2-dependent manner. Interacts with C9orf78. Interacts with SNRNP200; the interaction is direct. Interacts with TSSC4; the interaction is direct. As to expression, widely expressed.

It is found in the nucleus. The protein resides in the nucleus speckle. In terms of biological role, plays a role in pre-mRNA splicing as core component of precatalytic, catalytic and postcatalytic spliceosomal complexes, both of the predominant U2-type spliceosome and the minor U12-type spliceosome. Functions as a scaffold that mediates the ordered assembly of spliceosomal proteins and snRNAs. Required for the assembly of the U4/U6-U5 tri-snRNP complex, a building block of the spliceosome. Functions as a scaffold that positions spliceosomal U2, U5 and U6 snRNAs at splice sites on pre-mRNA substrates, so that splicing can occur. Interacts with both the 5' and the 3' splice site. The chain is Pre-mRNA-processing-splicing factor 8 (PRPF8) from Homo sapiens (Human).